The chain runs to 808 residues: Glutamate receptor 1.1 (808 aa).

The first 19 residues, 1–19 (MEILFSISILALLFSGVVA), serve as a signal peptide directing secretion. Residues 20-541 (APSDDDVFEE…MWTFFDPFEK (522 aa)) are Extracellular-facing. Residues asparagine 288, asparagine 339, and asparagine 504 are each glycosylated (N-linked (GlcNAc...) asparagine). A helical transmembrane segment spans residues 542 to 562 (SLWLASGAFFVLTGIVVWLVE). The Cytoplasmic segment spans residues 563-570 (RSVNPEFQ). A helical transmembrane segment spans residues 571 to 591 (GSWGQQLSMMLWFGFSTIVFA). Residues 592–602 (HREKLQKMSSR) are Cytoplasmic-facing. A helical transmembrane segment spans residues 603–623 (FLVIVWVFVVLILTSSYSANL). Topologically, residues 624-771 (TSTKTISRMQ…SKRFTFRELR (148 aa)) are extracellular. The helical transmembrane segment at 772 to 792 (GLFIIAGAAHVLVLALHLFHT) threads the bilayer. At 793-808 (RQEVSRLCTKLQSFYK) the chain is on the cytoplasmic side.

This sequence belongs to the glutamate-gated ion channel (TC 1.A.10.1) family. As to quaternary structure, may form heteromers. Expressed predominantly in roots. First detected in the root-shoot junction, and later in lateral roots and at the margin of matures leaves.

The protein resides in the membrane. Functionally, glutamate-gated receptor that probably acts as a non-selective cation channel. Can transport sodium, potassium, and calcium ions. Functions as a carbon and nitrogen regulator and/or sensor that regulates carbon and nitrogen metabolism and distinct physiological process such as germination through the control of acid abscisic (ABA) biosynthesis. May be involved in light-signal transduction and calcium homeostasis via the regulation of calcium influx into cells. Seems required for the regulation of the abscisic acid (ABA) signaling pathway that modulates many aspects of plant physiology such as seed germination and response to drought (e.g. stomata opening). The polypeptide is Glutamate receptor 1.1 (GLR1.1) (Arabidopsis thaliana (Mouse-ear cress)).